A 777-amino-acid chain; its full sequence is Glucocorticoid receptor (777 aa).

The segment covering 1-14 (MDSKESLTPGKEEN) has biased composition (basic and acidic residues). The tract at residues 1–21 (MDSKESLTPGKEENPSSVLTQ) is disordered. The segment at 1–420 (MDSKESLTPG…TATTGPPPKL (420 aa)) is modulating. Threonine 8 is subject to Phosphothreonine. Arginine 23 is modified (omega-N-methylarginine). A phosphoserine mark is found at serine 45, serine 113, serine 134, and serine 141. Positions 130–182 (NRSTSVPENPKSSASSSVSAAPKEKEFPKTHSDVSSEQQNLKGQTGTNGGNVK) are disordered. Positions 134–150 (SVPENPKSSASSSVSAA) are enriched in low complexity. Residues 151-163 (PKEKEFPKTHSDV) show a composition bias toward basic and acidic residues. Over residues 164–174 (SSEQQNLKGQT) the composition is skewed to polar residues. Phosphoserine occurs at positions 203, 211, and 226. A Glycyl lysine isopeptide (Lys-Gly) (interchain with G-Cter in SUMO2) cross-link involves residue lysine 258. Serine 267 is modified (phosphoserine). Residues lysine 277 and lysine 293 each participate in a glycyl lysine isopeptide (Lys-Gly) (interchain with G-Cter in SUMO); alternate cross-link. Glycyl lysine isopeptide (Lys-Gly) (interchain with G-Cter in SUMO2); alternate cross-links involve residues lysine 277 and lysine 293. Residues 394-414 (SSPSMRPDVSSPPSSSSTATT) show a composition bias toward low complexity. The segment at 394-415 (SSPSMRPDVSSPPSSSSTATTG) is disordered. Serine 404 is subject to Phosphoserine. A Glycyl lysine isopeptide (Lys-Gly) (interchain with G-Cter in ubiquitin) cross-link involves residue lysine 419. 2 NR C4-type zinc fingers span residues 421–441 (CLVCSDEASGCHYGVLTCGSC) and 457–481 (CAGRNDCIIDKIRRKNCPACRYRKC). A DNA-binding region (nuclear receptor) is located at residues 421-486 (CLVCSDEASG…RYRKCLQAGM (66 aa)). N6-acetyllysine occurs at positions 480, 492, 494, and 495. Positions 485 to 777 (GMNLEARKTK…NIKKLLFHQK (293 aa)) are interaction with CLOCK. The segment at 487–523 (NLEARKTKKKIKGIQQATTGVSQETSENPANKTIVPA) is hinge. The NR LBD domain occupies 524–758 (TLPQLTPTLV…FPEMLAEIIT (235 aa)). The interval 532–697 (LVSLLEVIEP…EIRMTYIKEL (166 aa)) is interaction with CRY1. Residue lysine 703 forms a Glycyl lysine isopeptide (Lys-Gly) (interchain with G-Cter in SUMO) linkage.

It belongs to the nuclear hormone receptor family. NR3 subfamily. In terms of assembly, heteromultimeric cytoplasmic complex with HSP90AA1, HSPA1A/HSPA1B, and FKBP5 or another immunophilin such as PPID, STIP1, or the immunophilin homolog PPP5C. Upon ligand binding FKBP5 dissociates from the complex and FKBP4 takes its place, thereby linking the complex to dynein and mediating transport to the nucleus, where the complex dissociates. Probably forms a complex composed of chaperones HSP90 and HSP70, co-chaperones CDC37, PPP5C, TSC1 and client protein TSC2, CDK4, AKT, RAF1 and NR3C1; this complex does not contain co-chaperones STIP1/HOP and PTGES3/p23. Directly interacts with UNC45A. Binds to DNA as a homodimer, and as heterodimer with NR3C2 or the retinoid X receptor. Binds STAT5A and STAT5B homodimers and heterodimers. Interacts with NRIP1, POU2F1, POU2F2 and TRIM28. Interacts with several coactivator complexes, including the SMARCA4 complex, CREBBP/EP300, TADA2L (Ada complex) and p160 coactivators such as NCOA2 and NCOA6. Interaction with BAG1 inhibits transactivation. Interacts with HEXIM1 and TGFB1I1. Interacts with NCOA1. Interacts with NCOA3, SMARCA4, SMARCC1, SMARCD1, and SMARCE1. Interacts with CLOCK, CRY1 and CRY2 in a ligand-dependent fashion. Interacts with CIART. Interacts with RWDD3. Interacts with UBE2I/UBC9 and this interaction is enhanced in the presence of RWDD3. Interacts with GRIP1. Interacts with NR4A3 (via nuclear receptor DNA-binding domain), represses transcription activity of NR4A3 on the POMC promoter Nur response element (NurRE). Directly interacts with PNRC2 to attract and form a complex with UPF1 and DCP1A; the interaction leads to rapid mRNA degradation. Interacts with GSK3B. Interacts with FNIP1 and FNIP2. Interacts (via C-terminus) with HNRNPU (via C-terminus). Interacts with MCM3AP. Interacts (via domain NR LBD) with HSP90AA1 and HSP90AB1. In the absence of hormonal ligand, interacts with TACC1. Interacts (via NR LBD domain) with ZNF764 (via KRAB domain); the interaction regulates transcription factor activity of NR3C1 by directing its actions toward certain biologic pathways. In terms of processing, acetylation by CLOCK reduces its binding to glucocorticoid response elements and its transcriptional activity. Increased proteasome-mediated degradation in response to glucocorticoids. Post-translationally, phosphorylated in the absence of hormone; becomes hyperphosphorylated in the presence of glucocorticoid. The Ser-203, Ser-226 and Ser-404-phosphorylated forms are mainly cytoplasmic, and the Ser-211-phosphorylated form is nuclear. Phosphorylation at Ser-211 increases transcriptional activity. Phosphorylation at Ser-203, Ser-226 and Ser-404 decreases signaling capacity. Phosphorylation at Ser-404 may protect from glucocorticoid-induced apoptosis. Phosphorylation at Ser-203 and Ser-211 is not required in regulation of chromosome segregation. May be dephosphorylated by PPP5C, attenuates NR3C1 action. In terms of processing, ubiquitinated by UBR5, leading to its degradation: UBR5 specifically recognizes and binds ligand-bound NR3C1 when it is not associated with coactivators (NCOAs). In presence of NCOAs, the UBR5-degron is not accessible, preventing its ubiquitination and degradation. Sumoylation at Lys-277 and Lys-293 negatively regulates its transcriptional activity. Sumoylation at Lys-703 positively regulates its transcriptional activity in the presence of RWDD3. Sumoylation at Lys-277 and Lys-293 is dispensable whereas sumoylation at Lys-703 is critical for the stimulatory effect of RWDD3 on its transcriptional activity. Heat shock increases sumoylation in a RWDD3-dependent manner. Within the infant and adult hippocampal formation, highest expression observed in the DG granule cell layer with moderate levels in the DG hilus, the CA2-CA4 pyramidal cell layer and the proximal part of the CA1 pyramidal cell layer. Moderate to high expression levels found in the presubiculum and in its' superficial layers. Weak but specific expression detected throughout the entire corticle mantle. In the amygdala, moderate levels were detected in the lateral, central and medial nuclei. Moderate expression levels were present in the PVNh alongside the third ventricle.

Its subcellular location is the cytoplasm. The protein resides in the nucleus. The protein localises to the mitochondrion. It localises to the cytoskeleton. It is found in the spindle. Its subcellular location is the microtubule organizing center. The protein resides in the centrosome. The protein localises to the chromosome. It localises to the nucleoplasm. Its function is as follows. Receptor for glucocorticoids (GC). Has a dual mode of action: as a transcription factor that binds to glucocorticoid response elements (GRE), both for nuclear and mitochondrial DNA, and as a modulator of other transcription factors. Affects inflammatory responses, cellular proliferation and differentiation in target tissues. Involved in chromatin remodeling. Plays a role in rapid mRNA degradation by binding to the 5' UTR of target mRNAs and interacting with PNRC2 in a ligand-dependent manner which recruits the RNA helicase UPF1 and the mRNA-decapping enzyme DCP1A, leading to RNA decay. Could act as a coactivator for STAT5-dependent transcription upon growth hormone (GH) stimulation and could reveal an essential role of hepatic GR in the control of body growth. Mediates glucocorticoid-induced apoptosis. Promotes accurate chromosome segregation during mitosis. May act as a tumor suppressor. May play a negative role in adipogenesis through the regulation of lipolytic and antilipogenic gene expression. This Callithrix jacchus (White-tufted-ear marmoset) protein is Glucocorticoid receptor (NR3C1).